The primary structure comprises 465 residues: 28S rRNA (cytosine-C(5))-methyltransferase (465 aa).

At glycine 2 the chain carries N-acetylglycine. Phosphoserine is present on serine 167. Residues 234-240 (CAAPGNK), aspartate 258, arginine 263, and aspartate 305 contribute to the S-adenosyl-L-methionine site. Catalysis depends on cysteine 359, which acts as the Nucleophile. Positions 430-465 (TPAPQTDAMDPEPLSQVPKRKRRRKAAVGASMQPST) are disordered.

It belongs to the class I-like SAM-binding methyltransferase superfamily. RsmB/NOP family. In terms of tissue distribution, in the hippocampus, specifically expressed in adult hippocampal NG2-positive oligodendrocyte precursor cells (at protein level).

It is found in the nucleus. Its subcellular location is the nucleolus. The catalysed reaction is a cytidine in 28S rRNA + S-adenosyl-L-methionine = a 5-methylcytidine in 28S rRNA + S-adenosyl-L-homocysteine + H(+). S-adenosyl-L-methionine-dependent methyltransferase that specifically methylates the C(5) position of cytosine 3438 (m5C3438) in 28S rRNA. m5C3782 promotes protein translation without affecting ribosome biogenesis and fidelity. Required for corpus callosum and cerebral cortex development. This is 28S rRNA (cytosine-C(5))-methyltransferase from Mus musculus (Mouse).